Reading from the N-terminus, the 92-residue chain is MLTSNRQGMAVYLTSLKFARQLRRFGYVHYVSKKMRYVVLYCNEEAVQTTMEKLQSFHFVKDVQLSMRPYVQTEFQNAKPDKAKEYDYKMGL.

This sequence belongs to the UPF0298 family.

The protein localises to the cytoplasm. This is UPF0298 protein BH2594 from Halalkalibacterium halodurans (strain ATCC BAA-125 / DSM 18197 / FERM 7344 / JCM 9153 / C-125) (Bacillus halodurans).